The following is a 323-amino-acid chain: MKPENKIPVLTRLSDEMKAVVNFQQPGLPPWPADGDIETQRQYYLLERRFWNADAPSMTTRTCAVPTPYGDVTTRLYSPQPTSQATLYYLHGGGFILGNLDTHDRIMRLLARYTGCTVIGIDYSLSPQARYPQAIEETVAVCSYFSQHADEYSLNVEKIGFAGDSAGAMLALASALWLRDKHIRCGNVIAILLWYGLYGLQDSVSRRLFGGAWDGLTREDLDMYEKAYLRNEDDRESPWYCLFNNDLTRDVPPCFIASAEFDPLIDDSRLLHQTLQAHQQPCEYKMYPGTLHAFLHYSRMMTIADDALQDGARFFMARMKTPR.

The short motif at 91 to 93 (HGG) is the Involved in the stabilization of the negatively charged intermediate by the formation of the oxyanion hole element. Residues Ser-165, Asp-262, and His-292 contribute to the active site.

The protein belongs to the 'GDXG' lipolytic enzyme family. As to quaternary structure, homodimer. Interacts with MalT and MelA.

It localises to the cytoplasm. In terms of biological role, displays esterase activity towards short chain fatty esters (acyl chain length of up to 8 carbons). Able to hydrolyze triacetylglycerol (triacetin) and tributyrylglycerol (tributyrin), but not trioleylglycerol (triolein) or cholesterol oleate. Negatively regulates MalT activity by antagonizing maltotriose binding. Inhibits MelA galactosidase activity. The polypeptide is Acetyl esterase (Salmonella agona (strain SL483)).